Here is a 193-residue protein sequence, read N- to C-terminus: Ion-translocating oxidoreductase complex subunit A (193 aa).

Transmembrane regions (helical) follow at residues 5 to 25 (FFFILSNILIDNFILVKFLGL), 47 to 67 (FVVVVSTVLLWFVNFFILLPF), 72 to 92 (LRIIVYMLIISFGVQLIEIIL), 102 to 122 (ILGIFLPLITTNCAVLAIPLF), 134 to 154 (ILYAVSASFGFTLVMVIFSSI), and 171 to 191 (PIVLITVSLISIVFMGFKGLV).

It belongs to the NqrDE/RnfAE family. As to quaternary structure, the complex is composed of six subunits: RnfA, RnfB, RnfC, RnfD, RnfE and RnfG.

It localises to the cell inner membrane. Functionally, part of a membrane-bound complex that couples electron transfer with translocation of ions across the membrane. This chain is Ion-translocating oxidoreductase complex subunit A, found in Buchnera aphidicola subsp. Schizaphis graminum (strain Sg).